Consider the following 219-residue polypeptide: Ribose-5-phosphate isomerase A (219 aa).

Residues 28–31, 81–84, and 94–97 each bind substrate; these read SGST, DGAD, and KGGG. E103 functions as the Proton acceptor in the catalytic mechanism. K121 lines the substrate pocket.

This sequence belongs to the ribose 5-phosphate isomerase family. In terms of assembly, homodimer.

It catalyses the reaction aldehydo-D-ribose 5-phosphate = D-ribulose 5-phosphate. It participates in carbohydrate degradation; pentose phosphate pathway; D-ribose 5-phosphate from D-ribulose 5-phosphate (non-oxidative stage): step 1/1. Functionally, catalyzes the reversible conversion of ribose-5-phosphate to ribulose 5-phosphate. In Haemophilus ducreyi (strain 35000HP / ATCC 700724), this protein is Ribose-5-phosphate isomerase A.